The primary structure comprises 242 residues: Biosynthetic peptidoglycan transglycosylase (242 aa).

The helical transmembrane segment at 19–39 (LMVVLAIFWGGGIALFSVAPV) threads the bilayer.

This sequence belongs to the glycosyltransferase 51 family.

The protein resides in the cell inner membrane. It carries out the reaction [GlcNAc-(1-&gt;4)-Mur2Ac(oyl-L-Ala-gamma-D-Glu-L-Lys-D-Ala-D-Ala)](n)-di-trans,octa-cis-undecaprenyl diphosphate + beta-D-GlcNAc-(1-&gt;4)-Mur2Ac(oyl-L-Ala-gamma-D-Glu-L-Lys-D-Ala-D-Ala)-di-trans,octa-cis-undecaprenyl diphosphate = [GlcNAc-(1-&gt;4)-Mur2Ac(oyl-L-Ala-gamma-D-Glu-L-Lys-D-Ala-D-Ala)](n+1)-di-trans,octa-cis-undecaprenyl diphosphate + di-trans,octa-cis-undecaprenyl diphosphate + H(+). The protein operates within cell wall biogenesis; peptidoglycan biosynthesis. In terms of biological role, peptidoglycan polymerase that catalyzes glycan chain elongation from lipid-linked precursors. The chain is Biosynthetic peptidoglycan transglycosylase from Escherichia coli O45:K1 (strain S88 / ExPEC).